A 289-amino-acid polypeptide reads, in one-letter code: Syntaxin-2 (289 aa).

Topologically, residues 1–265 (MRDRLPDLTA…KYQSKARRKK (265 aa)) are cytoplasmic. Residues 68-101 (EGKIKEELEDLDKEIKKTANRIRGKLKSIEQSCD) are a coiled coil. Residues 192 to 254 (LNEIESRHKD…EHAKEETKKA (63 aa)) enclose the t-SNARE coiled-coil homology domain. A helical; Anchor for type IV membrane protein transmembrane segment spans residues 266 to 289 (WIIAAVAVAVIAVLALIIGLSVGK).

The protein belongs to the syntaxin family. Interacts with SYT6 and SYT8; the interaction is Ca(2+)-dependent.

Its subcellular location is the membrane. Its function is as follows. Essential for epithelial morphogenesis. May mediate Ca(2+)-regulation of exocytosis acrosomal reaction in sperm. The sequence is that of Syntaxin-2 (Stx2) from Mus musculus (Mouse).